The following is a 203-amino-acid chain: Thymidylate kinase (203 aa).

9-16 contributes to the ATP binding site; it reads GPEGSGKT.

The protein belongs to the thymidylate kinase family.

It carries out the reaction dTMP + ATP = dTDP + ADP. Its function is as follows. Phosphorylation of dTMP to form dTDP in both de novo and salvage pathways of dTTP synthesis. This chain is Thymidylate kinase, found in Staphylococcus haemolyticus (strain JCSC1435).